Reading from the N-terminus, the 500-residue chain is Lysine--tRNA ligase (500 aa).

Positions 410 and 417 each coordinate Mg(2+).

It belongs to the class-II aminoacyl-tRNA synthetase family. In terms of assembly, homodimer. Requires Mg(2+) as cofactor.

It localises to the cytoplasm. The catalysed reaction is tRNA(Lys) + L-lysine + ATP = L-lysyl-tRNA(Lys) + AMP + diphosphate. This Shewanella denitrificans (strain OS217 / ATCC BAA-1090 / DSM 15013) protein is Lysine--tRNA ligase.